Here is a 559-residue protein sequence, read N- to C-terminus: uncharacterized protein (559 aa).

2 disordered regions span residues 315-360 and 454-559; these read TDDA…ERDI and DKID…STEN. Polar residues predominate over residues 320-329; the sequence is NENSDNSMNT. The segment covering 348 to 357 has biased composition (acidic residues); it reads DNNDDSDDSE. Residues 433 to 495 are a coiled coil; it reads ELKIQEMEKI…KRRQKRSQRS (63 aa). A compositionally biased stretch (basic and acidic residues) spans 454–501; sequence DKIDMDQIKSEMSRRRDESNKRRDEKRKDREEKRRQKRSQRSDTRKQG. A compositionally biased stretch (low complexity) spans 507-527; sequence SDEATSDQTQSTDSNNTTQTA.

Its subcellular location is the virion. This is an uncharacterized protein from Acanthamoeba polyphaga mimivirus (APMV).